Here is a 315-residue protein sequence, read N- to C-terminus: Lipoyl synthase (315 aa).

7 residues coordinate [4Fe-4S] cluster: cysteine 62, cysteine 67, cysteine 73, cysteine 88, cysteine 92, cysteine 95, and serine 302. One can recognise a Radical SAM core domain in the interval 74–291 (FGKGTATFMI…ETEALAMGFK (218 aa)).

Belongs to the radical SAM superfamily. Lipoyl synthase family. It depends on [4Fe-4S] cluster as a cofactor.

The protein resides in the cytoplasm. It carries out the reaction [[Fe-S] cluster scaffold protein carrying a second [4Fe-4S](2+) cluster] + N(6)-octanoyl-L-lysyl-[protein] + 2 oxidized [2Fe-2S]-[ferredoxin] + 2 S-adenosyl-L-methionine + 4 H(+) = [[Fe-S] cluster scaffold protein] + N(6)-[(R)-dihydrolipoyl]-L-lysyl-[protein] + 4 Fe(3+) + 2 hydrogen sulfide + 2 5'-deoxyadenosine + 2 L-methionine + 2 reduced [2Fe-2S]-[ferredoxin]. It participates in protein modification; protein lipoylation via endogenous pathway; protein N(6)-(lipoyl)lysine from octanoyl-[acyl-carrier-protein]: step 2/2. Catalyzes the radical-mediated insertion of two sulfur atoms into the C-6 and C-8 positions of the octanoyl moiety bound to the lipoyl domains of lipoate-dependent enzymes, thereby converting the octanoylated domains into lipoylated derivatives. This chain is Lipoyl synthase, found in Aromatoleum aromaticum (strain DSM 19018 / LMG 30748 / EbN1) (Azoarcus sp. (strain EbN1)).